The primary structure comprises 27 residues: Endoglucanase gh5 (27 aa).

The Nucleophile role is filled by glutamate 6.

It carries out the reaction Endohydrolysis of (1-&gt;4)-beta-D-glucosidic linkages in cellulose, lichenin and cereal beta-D-glucans.. Activity is stimulated by zinc ions, potassium ions and DTT. Activity is inhibited by manganese and chloride ions. Functionally, endoglucanase (EG) that cleaves the internal beta-1,4-glucosidic bonds in cellulose. This is Endoglucanase gh5 from Fomes meliae (Fomitopsis meliae).